Here is a 147-residue protein sequence, read N- to C-terminus: Nucleoside diphosphate kinase (147 aa).

Residues Lys9, Phe57, Arg85, Thr91, Arg102, and Asn112 each contribute to the ATP site. His115 functions as the Pros-phosphohistidine intermediate in the catalytic mechanism.

This sequence belongs to the NDK family. It depends on Mg(2+) as a cofactor.

It is found in the cytoplasm. The catalysed reaction is a 2'-deoxyribonucleoside 5'-diphosphate + ATP = a 2'-deoxyribonucleoside 5'-triphosphate + ADP. The enzyme catalyses a ribonucleoside 5'-diphosphate + ATP = a ribonucleoside 5'-triphosphate + ADP. In terms of biological role, major role in the synthesis of nucleoside triphosphates other than ATP. The ATP gamma phosphate is transferred to the NDP beta phosphate via a ping-pong mechanism, using a phosphorylated active-site intermediate. The protein is Nucleoside diphosphate kinase of Thermoplasma volcanium (strain ATCC 51530 / DSM 4299 / JCM 9571 / NBRC 15438 / GSS1).